Reading from the N-terminus, the 384-residue chain is 8-amino-7-oxononanoate synthase (384 aa).

Residue arginine 21 coordinates substrate. 108–109 is a binding site for pyridoxal 5'-phosphate; it reads GF. Substrate is bound at residue histidine 133. Pyridoxal 5'-phosphate-binding residues include serine 179, histidine 207, and threonine 233. Residue lysine 236 is modified to N6-(pyridoxal phosphate)lysine. Threonine 352 contributes to the substrate binding site.

The protein belongs to the class-II pyridoxal-phosphate-dependent aminotransferase family. BioF subfamily. In terms of assembly, homodimer. Requires pyridoxal 5'-phosphate as cofactor.

The catalysed reaction is 6-carboxyhexanoyl-[ACP] + L-alanine + H(+) = (8S)-8-amino-7-oxononanoate + holo-[ACP] + CO2. It functions in the pathway cofactor biosynthesis; biotin biosynthesis. In terms of biological role, catalyzes the decarboxylative condensation of pimeloyl-[acyl-carrier protein] and L-alanine to produce 8-amino-7-oxononanoate (AON), [acyl-carrier protein], and carbon dioxide. The polypeptide is 8-amino-7-oxononanoate synthase (Escherichia coli (strain SE11)).